The primary structure comprises 89 residues: Large ribosomal subunit protein L37-2 (89 aa).

4 residues coordinate Zn(2+): cysteine 19, cysteine 22, cysteine 34, and cysteine 37. A C4-type zinc finger spans residues 19 to 37 (CRRCGNSSYHLQKSKCSQC).

This sequence belongs to the eukaryotic ribosomal protein eL37 family. Zn(2+) serves as cofactor.

Binds to the 23S rRNA. The polypeptide is Large ribosomal subunit protein L37-2 (Drosophila melanogaster (Fruit fly)).